The following is a 453-amino-acid chain: Bifunctional protein GlmU (453 aa).

Positions 1–226 (MKFSAVILAA…PIEVEGVNDR (226 aa)) are pyrophosphorylase. Residues 8–11 (LAAG), Lys-22, Gln-73, 78–79 (GT), 100–102 (YGD), Gly-137, Glu-151, Asn-166, and Asn-224 contribute to the UDP-N-acetyl-alpha-D-glucosamine site. Asp-102 lines the Mg(2+) pocket. Asn-224 is a Mg(2+) binding site. The segment at 227–247 (AQLARLERAFQAAQAKKLLEQ) is linker. An N-acetyltransferase region spans residues 248 to 453 (GVMLRDPARF…TGWQRPVKKK (206 aa)). 2 residues coordinate UDP-N-acetyl-alpha-D-glucosamine: Arg-330 and Lys-348. The active-site Proton acceptor is the His-360. The UDP-N-acetyl-alpha-D-glucosamine site is built by Tyr-363 and Asn-374. Acetyl-CoA is bound by residues Ala-377, 383–384 (NY), Ser-402, Ala-420, and Arg-437.

The protein in the N-terminal section; belongs to the N-acetylglucosamine-1-phosphate uridyltransferase family. In the C-terminal section; belongs to the transferase hexapeptide repeat family. As to quaternary structure, homotrimer. Mg(2+) serves as cofactor.

Its subcellular location is the cytoplasm. The enzyme catalyses alpha-D-glucosamine 1-phosphate + acetyl-CoA = N-acetyl-alpha-D-glucosamine 1-phosphate + CoA + H(+). It catalyses the reaction N-acetyl-alpha-D-glucosamine 1-phosphate + UTP + H(+) = UDP-N-acetyl-alpha-D-glucosamine + diphosphate. It participates in nucleotide-sugar biosynthesis; UDP-N-acetyl-alpha-D-glucosamine biosynthesis; N-acetyl-alpha-D-glucosamine 1-phosphate from alpha-D-glucosamine 6-phosphate (route II): step 2/2. It functions in the pathway nucleotide-sugar biosynthesis; UDP-N-acetyl-alpha-D-glucosamine biosynthesis; UDP-N-acetyl-alpha-D-glucosamine from N-acetyl-alpha-D-glucosamine 1-phosphate: step 1/1. Its pathway is bacterial outer membrane biogenesis; LPS lipid A biosynthesis. Its function is as follows. Catalyzes the last two sequential reactions in the de novo biosynthetic pathway for UDP-N-acetylglucosamine (UDP-GlcNAc). The C-terminal domain catalyzes the transfer of acetyl group from acetyl coenzyme A to glucosamine-1-phosphate (GlcN-1-P) to produce N-acetylglucosamine-1-phosphate (GlcNAc-1-P), which is converted into UDP-GlcNAc by the transfer of uridine 5-monophosphate (from uridine 5-triphosphate), a reaction catalyzed by the N-terminal domain. This is Bifunctional protein GlmU from Vibrio vulnificus (strain YJ016).